Reading from the N-terminus, the 148-residue chain is Aspartate carbamoyltransferase regulatory chain (148 aa).

4 residues coordinate Zn(2+): cysteine 106, cysteine 111, cysteine 134, and cysteine 137.

Belongs to the PyrI family. In terms of assembly, contains catalytic and regulatory chains. Zn(2+) is required as a cofactor.

Its function is as follows. Involved in allosteric regulation of aspartate carbamoyltransferase. The polypeptide is Aspartate carbamoyltransferase regulatory chain (Methanococcus maripaludis (strain DSM 14266 / JCM 13030 / NBRC 101832 / S2 / LL)).